We begin with the raw amino-acid sequence, 142 residues long: Large ribosomal subunit protein uL13 (142 aa).

Belongs to the universal ribosomal protein uL13 family. As to quaternary structure, part of the 50S ribosomal subunit.

In terms of biological role, this protein is one of the early assembly proteins of the 50S ribosomal subunit, although it is not seen to bind rRNA by itself. It is important during the early stages of 50S assembly. The chain is Large ribosomal subunit protein uL13 from Xanthomonas campestris pv. campestris (strain ATCC 33913 / DSM 3586 / NCPPB 528 / LMG 568 / P 25).